Consider the following 125-residue polypeptide: Oxytocin-neurophysin 1 (125 aa).

A signal peptide spans 1 to 19 (MAGSSLACCLLGLLALTSA). An intrachain disulfide couples Cys20 to Cys25. Position 28 is a glycine amide (Gly28). Disulfide bonds link Cys41-Cys85, Cys44-Cys58, Cys52-Cys75, Cys59-Cys65, Cys92-Cys104, Cys98-Cys116, and Cys105-Cys110.

The protein belongs to the vasopressin/oxytocin family. As to quaternary structure, interacts with oxytocin receptor (Ki=1.5 nM). Interacts with vasopressin V1aR/AVPR1A (Ki=37 nM), V1bR/AVPR1B (Ki=222 nM), and V2R/AVPR2 receptors (Ki=823 nM).

In terms of biological role, neurophysin 1 specifically binds oxytocin. Oxytocin causes contraction of the smooth muscle of the uterus and of the mammary gland. Acts by binding to oxytocin receptor (OXTR). The sequence is that of Oxytocin-neurophysin 1 (OXT) from Ovis aries (Sheep).